A 142-amino-acid chain; its full sequence is Large ribosomal subunit protein uL11 (142 aa).

This sequence belongs to the universal ribosomal protein uL11 family. Part of the ribosomal stalk of the 50S ribosomal subunit. Interacts with L10 and the large rRNA to form the base of the stalk. L10 forms an elongated spine to which L12 dimers bind in a sequential fashion forming a multimeric L10(L12)X complex. One or more lysine residues are methylated.

Forms part of the ribosomal stalk which helps the ribosome interact with GTP-bound translation factors. The polypeptide is Large ribosomal subunit protein uL11 (Buchnera aphidicola subsp. Acyrthosiphon pisum (strain APS) (Acyrthosiphon pisum symbiotic bacterium)).